We begin with the raw amino-acid sequence, 887 residues long: Alanine--tRNA ligase (887 aa).

Zn(2+)-binding residues include His-564, His-568, Cys-676, and His-680.

The protein belongs to the class-II aminoacyl-tRNA synthetase family. The cofactor is Zn(2+).

Its subcellular location is the cytoplasm. The enzyme catalyses tRNA(Ala) + L-alanine + ATP = L-alanyl-tRNA(Ala) + AMP + diphosphate. In terms of biological role, catalyzes the attachment of alanine to tRNA(Ala) in a two-step reaction: alanine is first activated by ATP to form Ala-AMP and then transferred to the acceptor end of tRNA(Ala). Also edits incorrectly charged Ser-tRNA(Ala) and Gly-tRNA(Ala) via its editing domain. This Rhizobium meliloti (strain 1021) (Ensifer meliloti) protein is Alanine--tRNA ligase.